The primary structure comprises 340 residues: Ketol-acid reductoisomerase (NADP(+)) (340 aa).

The KARI N-terminal Rossmann domain occupies 3–183; the sequence is INVYYDKDCD…GGGRTGIIET (181 aa). NADP(+)-binding positions include 26–29, S54, and 84–87; these read FGSQ and DELQ. Residue H109 is part of the active site. Residue G135 coordinates NADP(+). One can recognise a KARI C-terminal knotted domain in the interval 184-329; the sequence is TFKDETETDL…KKLRAMMPWI (146 aa). Mg(2+) contacts are provided by D192, E196, E228, and E232. Residue S253 participates in substrate binding.

This sequence belongs to the ketol-acid reductoisomerase family. Mg(2+) is required as a cofactor.

The catalysed reaction is (2R)-2,3-dihydroxy-3-methylbutanoate + NADP(+) = (2S)-2-acetolactate + NADPH + H(+). The enzyme catalyses (2R,3R)-2,3-dihydroxy-3-methylpentanoate + NADP(+) = (S)-2-ethyl-2-hydroxy-3-oxobutanoate + NADPH + H(+). It participates in amino-acid biosynthesis; L-isoleucine biosynthesis; L-isoleucine from 2-oxobutanoate: step 2/4. Its pathway is amino-acid biosynthesis; L-valine biosynthesis; L-valine from pyruvate: step 2/4. In terms of biological role, involved in the biosynthesis of branched-chain amino acids (BCAA). Catalyzes an alkyl-migration followed by a ketol-acid reduction of (S)-2-acetolactate (S2AL) to yield (R)-2,3-dihydroxy-isovalerate. In the isomerase reaction, S2AL is rearranged via a Mg-dependent methyl migration to produce 3-hydroxy-3-methyl-2-ketobutyrate (HMKB). In the reductase reaction, this 2-ketoacid undergoes a metal-dependent reduction by NADPH to yield (R)-2,3-dihydroxy-isovalerate. The sequence is that of Ketol-acid reductoisomerase (NADP(+)) from Campylobacter concisus (strain 13826).